Consider the following 275-residue polypeptide: Large ribosomal subunit protein uL2c (275 aa).

Residues 225–249 (PVDHPHGGGEGRAPIGRKKPTTPWG) form a disordered region.

Belongs to the universal ribosomal protein uL2 family. As to quaternary structure, part of the 50S ribosomal subunit.

It localises to the plastid. This is Large ribosomal subunit protein uL2c (rpl2) from Cuscuta reflexa (Southern Asian dodder).